Consider the following 361-residue polypeptide: Glutamate 5-kinase (361 aa).

Lys-14 contacts ATP. Substrate contacts are provided by Ser-54, Asp-141, and Asn-153. The PUA domain occupies 277 to 355; the sequence is KGAVIINQGA…KGLKPVIHYD (79 aa).

This sequence belongs to the glutamate 5-kinase family.

It localises to the cytoplasm. It catalyses the reaction L-glutamate + ATP = L-glutamyl 5-phosphate + ADP. It participates in amino-acid biosynthesis; L-proline biosynthesis; L-glutamate 5-semialdehyde from L-glutamate: step 1/2. Functionally, catalyzes the transfer of a phosphate group to glutamate to form L-glutamate 5-phosphate. The chain is Glutamate 5-kinase from Chlorobaculum tepidum (strain ATCC 49652 / DSM 12025 / NBRC 103806 / TLS) (Chlorobium tepidum).